Reading from the N-terminus, the 394-residue chain is Elongation factor Tu (394 aa).

One can recognise a tr-type G domain in the interval 10–204 (KPHVNIGTIG…AVDSYIPQPV (195 aa)). The segment at 19-26 (GHVDHGKT) is G1. 19–26 (GHVDHGKT) provides a ligand contact to GTP. T26 contacts Mg(2+). The interval 60 to 64 (GITIS) is G2. A G3 region spans residues 81 to 84 (DCPG). Residues 81–85 (DCPGH) and 136–139 (NKID) contribute to the GTP site. The tract at residues 136 to 139 (NKID) is G4. The tract at residues 174–176 (SAL) is G5.

Belongs to the TRAFAC class translation factor GTPase superfamily. Classic translation factor GTPase family. EF-Tu/EF-1A subfamily. Monomer.

It is found in the cytoplasm. The enzyme catalyses GTP + H2O = GDP + phosphate + H(+). Its function is as follows. GTP hydrolase that promotes the GTP-dependent binding of aminoacyl-tRNA to the A-site of ribosomes during protein biosynthesis. The sequence is that of Elongation factor Tu from Rickettsia peacockii (strain Rustic).